Reading from the N-terminus, the 338-residue chain is Flap endonuclease 1 (338 aa).

The segment at 1-98 (MGTDIGDLLQ…ETLSRRKEVR (98 aa)) is N-domain. Mg(2+) is bound by residues Asp27, Asp80, Glu152, Glu154, Asp173, Asp175, and Asp236. The I-domain stretch occupies residues 116-257 (AAYKYAQASS…TALKLIKKHG (142 aa)). The interval 330–338 (RQKTLDQWF) is interaction with PCNA.

The protein belongs to the XPG/RAD2 endonuclease family. FEN1 subfamily. As to quaternary structure, interacts with PCNA. PCNA stimulates the nuclease activity without altering cleavage specificity. Mg(2+) serves as cofactor.

Functionally, structure-specific nuclease with 5'-flap endonuclease and 5'-3' exonuclease activities involved in DNA replication and repair. During DNA replication, cleaves the 5'-overhanging flap structure that is generated by displacement synthesis when DNA polymerase encounters the 5'-end of a downstream Okazaki fragment. Binds the unpaired 3'-DNA end and kinks the DNA to facilitate 5' cleavage specificity. Cleaves one nucleotide into the double-stranded DNA from the junction in flap DNA, leaving a nick for ligation. Also involved in the base excision repair (BER) pathway. Acts as a genome stabilization factor that prevents flaps from equilibrating into structures that lead to duplications and deletions. Also possesses 5'-3' exonuclease activity on nicked or gapped double-stranded DNA. This Methanosarcina acetivorans (strain ATCC 35395 / DSM 2834 / JCM 12185 / C2A) protein is Flap endonuclease 1.